A 604-amino-acid chain; its full sequence is 3-hydroxy-3-methylglutaryl-coenzyme A reductase (604 aa).

The tract at residues 1 to 31 is disordered; it reads MDVRRRSEKPAYPTKEFAAGEKPLKPHKQQQ. The next 2 helical transmembrane spans lie at 40–62 and 90–110; these read ASDA…FFSV and AIAS…IGFV. A linker region spans residues 111–189; the sequence is QSFVSRDNND…PLVTPAASEE (79 aa). A catalytic region spans residues 190-604; sequence DEEIIKSVVQ…STKDVTKASS (415 aa). Catalysis depends on Glu-283, which acts as the Charge relay system. Asn-347 carries an N-linked (GlcNAc...) asparagine glycan. Catalysis depends on Lys-415, which acts as the Charge relay system. Asn-460 carries N-linked (GlcNAc...) asparagine glycosylation. The active-site Charge relay system is the Asp-491. His-589 acts as the Proton donor in catalysis. A glycan (N-linked (GlcNAc...) asparagine) is linked at Asn-593.

Belongs to the HMG-CoA reductase family. As to expression, found in protoplasts and leaves submitted to stress. Low levels found in apexes, anthers and roots.

It localises to the endoplasmic reticulum membrane. It carries out the reaction (R)-mevalonate + 2 NADP(+) + CoA = (3S)-3-hydroxy-3-methylglutaryl-CoA + 2 NADPH + 2 H(+). It functions in the pathway metabolic intermediate biosynthesis; (R)-mevalonate biosynthesis; (R)-mevalonate from acetyl-CoA: step 3/3. Functionally, catalyzes the synthesis of mevalonate, the specific precursor of all isoprenoid compounds present in plants. Possible role in plant defense mechanisms as well as in the cell cycle. The polypeptide is 3-hydroxy-3-methylglutaryl-coenzyme A reductase (HMGR) (Nicotiana sylvestris (Wood tobacco)).